The following is a 751-amino-acid chain: Pyridoxal-dependent decarboxylase domain-containing protein 1 (751 aa).

The tract at residues 659 to 751 (QMRKEDSPDS…QEAESVETIR (93 aa)) is disordered. A compositionally biased stretch (polar residues) spans 690–702 (DSISETSSVSQLE). Residues 720–729 (PQERPAHILE) are compositionally biased toward basic and acidic residues. Acidic residues predominate over residues 742-751 (QEAESVETIR).

This sequence belongs to the group II decarboxylase family. Pyridoxal 5'-phosphate serves as cofactor.

The polypeptide is Pyridoxal-dependent decarboxylase domain-containing protein 1 (pdxdc1) (Danio rerio (Zebrafish)).